We begin with the raw amino-acid sequence, 179 residues long: Large ribosomal subunit protein uL5 (179 aa).

The protein belongs to the universal ribosomal protein uL5 family. In terms of assembly, part of the 50S ribosomal subunit; part of the 5S rRNA/L5/L18/L25 subcomplex. Contacts the 5S rRNA and the P site tRNA. Forms a bridge to the 30S subunit in the 70S ribosome.

In terms of biological role, this is one of the proteins that bind and probably mediate the attachment of the 5S RNA into the large ribosomal subunit, where it forms part of the central protuberance. In the 70S ribosome it contacts protein S13 of the 30S subunit (bridge B1b), connecting the 2 subunits; this bridge is implicated in subunit movement. Contacts the P site tRNA; the 5S rRNA and some of its associated proteins might help stabilize positioning of ribosome-bound tRNAs. This Histophilus somni (strain 129Pt) (Haemophilus somnus) protein is Large ribosomal subunit protein uL5.